Consider the following 92-residue polypeptide: Signal recognition particle 19 kDa protein (92 aa).

The protein belongs to the SRP19 family. In terms of assembly, part of the signal recognition particle protein translocation system, which is composed of SRP and FtsY. Archaeal SRP consists of a 7S RNA molecule of 300 nucleotides and two protein subunits: SRP54 and SRP19.

The protein resides in the cytoplasm. In terms of biological role, involved in targeting and insertion of nascent membrane proteins into the cytoplasmic membrane. Binds directly to 7S RNA and mediates binding of the 54 kDa subunit of the SRP. The polypeptide is Signal recognition particle 19 kDa protein (Halobacterium salinarum (strain ATCC 29341 / DSM 671 / R1)).